The following is a 214-amino-acid chain: Thymidylate kinase (214 aa).

Glycine 7–serine 14 provides a ligand contact to ATP.

It belongs to the thymidylate kinase family.

The enzyme catalyses dTMP + ATP = dTDP + ADP. In terms of biological role, phosphorylation of dTMP to form dTDP in both de novo and salvage pathways of dTTP synthesis. The polypeptide is Thymidylate kinase (Chlorobaculum tepidum (strain ATCC 49652 / DSM 12025 / NBRC 103806 / TLS) (Chlorobium tepidum)).